The following is a 140-amino-acid chain: Early nodulin-like protein 22 (140 aa).

A signal peptide spans 1–28 (MAQSSGHVSYVAVTVPIAIVMTVLCLFL). Residues 39-138 (TTYIVGGDDG…GLKMAIKALA (100 aa)) form the Phytocyanin domain. Asn-85 is a glycosylation site (N-linked (GlcNAc...) asparagine). A disulfide bond links Cys-92 and Cys-126.

It belongs to the early nodulin-like (ENODL) family.

Functionally, may act as a carbohydrate transporter. The sequence is that of Early nodulin-like protein 22 from Arabidopsis thaliana (Mouse-ear cress).